The primary structure comprises 188 residues: Guanylate kinase (188 aa).

Residues 2–183 (TKLIIISAPS…CVEQIRKAIA (182 aa)) form the Guanylate kinase-like domain. Position 9-16 (9-16 (APSGTGKS)) interacts with ATP.

This sequence belongs to the guanylate kinase family.

It localises to the cytoplasm. It carries out the reaction GMP + ATP = GDP + ADP. Its function is as follows. Essential for recycling GMP and indirectly, cGMP. The chain is Guanylate kinase from Porphyromonas gingivalis (strain ATCC BAA-308 / W83).